The primary structure comprises 89 residues: MALDAAVKQTIITEYATHEGDTGSPEVQIAMLSQRIKDLTEHLKTHKHDHHSRRGLMLLVGQRRRLLGYLQKVDVNRYRALIERLGLRR.

This sequence belongs to the universal ribosomal protein uS15 family. Part of the 30S ribosomal subunit. Forms a bridge to the 50S subunit in the 70S ribosome, contacting the 23S rRNA.

In terms of biological role, one of the primary rRNA binding proteins, it binds directly to 16S rRNA where it helps nucleate assembly of the platform of the 30S subunit by binding and bridging several RNA helices of the 16S rRNA. Its function is as follows. Forms an intersubunit bridge (bridge B4) with the 23S rRNA of the 50S subunit in the ribosome. The protein is Small ribosomal subunit protein uS15 of Beutenbergia cavernae (strain ATCC BAA-8 / DSM 12333 / CCUG 43141 / JCM 11478 / NBRC 16432 / NCIMB 13614 / HKI 0122).